We begin with the raw amino-acid sequence, 336 residues long: uncharacterized protein (336 aa).

Positions 1–23 (MKTRHLVYLAFALLGLGLAGLLE) are cleaved as a signal peptide. 3 helical membrane passes run 34-54 (LLSL…LLLG), 75-95 (VVVA…LLTT), and 106-126 (VHSL…ALGY). The region spanning 144–255 (VLDTSVLVDG…MARIYGVKAL (112 aa)) is the PINc domain. Position 222 (Asp222) interacts with Mg(2+). The TRAM domain maps to 267–328 (QLQVGDTLKL…IQTQVGRLFF (62 aa)).

This sequence belongs to the PINc/VapC protein family. Mg(2+) is required as a cofactor.

Its subcellular location is the membrane. Part of a toxin-antitoxin (TA) system. An RNase. This is an uncharacterized protein from Thermus thermophilus (strain ATCC 27634 / DSM 579 / HB8).